Reading from the N-terminus, the 356-residue chain is tRNA-specific 2-thiouridylase MnmA 1 (356 aa).

Residues 8-15 (GMSGGVDS) and M34 contribute to the ATP site. C103 serves as the catalytic Nucleophile. A disulfide bridge links C103 with C199. G127 is an ATP binding site. The segment at 149 to 151 (KDQ) is interaction with tRNA. C199 functions as the Cysteine persulfide intermediate in the catalytic mechanism. The segment at 305–306 (RY) is interaction with tRNA.

This sequence belongs to the MnmA/TRMU family.

It localises to the cytoplasm. The enzyme catalyses S-sulfanyl-L-cysteinyl-[protein] + uridine(34) in tRNA + AH2 + ATP = 2-thiouridine(34) in tRNA + L-cysteinyl-[protein] + A + AMP + diphosphate + H(+). Functionally, catalyzes the 2-thiolation of uridine at the wobble position (U34) of tRNA, leading to the formation of s(2)U34. This is tRNA-specific 2-thiouridylase MnmA 1 from Clostridium botulinum (strain ATCC 19397 / Type A).